A 296-amino-acid polypeptide reads, in one-letter code: Glycine--tRNA ligase alpha subunit (296 aa).

The protein belongs to the class-II aminoacyl-tRNA synthetase family. Tetramer of two alpha and two beta subunits.

It localises to the cytoplasm. The enzyme catalyses tRNA(Gly) + glycine + ATP = glycyl-tRNA(Gly) + AMP + diphosphate. The sequence is that of Glycine--tRNA ligase alpha subunit from Exiguobacterium sibiricum (strain DSM 17290 / CCUG 55495 / CIP 109462 / JCM 13490 / 255-15).